A 317-amino-acid chain; its full sequence is Peptidyl-prolyl cis-trans isomerase CYP26-2, chloroplastic (317 aa).

Residues 1 to 37 (MMQPNAKLLSPSAKFLPSPIEPPQHNRRTTVGAPPSL) form a disordered region. In terms of domain architecture, PPIase cyclophilin-type spans 95–311 (FIDVSIDGEP…SKVVVTNCGL (217 aa)).

The protein belongs to the cyclophilin-type PPIase family. Ubiquitous. Lower levels of expression in roots.

It is found in the plastid. Its subcellular location is the chloroplast thylakoid. The catalysed reaction is [protein]-peptidylproline (omega=180) = [protein]-peptidylproline (omega=0). PPIases accelerate the folding of proteins. It catalyzes the cis-trans isomerization of proline imidic peptide bonds in oligopeptides. This Arabidopsis thaliana (Mouse-ear cress) protein is Peptidyl-prolyl cis-trans isomerase CYP26-2, chloroplastic (CYP26-2).